We begin with the raw amino-acid sequence, 645 residues long: tRNA 5-methylaminomethyl-2-thiouridine biosynthesis bifunctional protein MnmC (645 aa).

The segment at 1-230 (MPMSEPIDWL…KRHNLHAVFD (230 aa)) is tRNA (mnm(5)s(2)U34)-methyltransferase. The tract at residues 254 to 645 (LGAGIAGAAA…LASERLGRRR (392 aa)) is FAD-dependent cmnm(5)s(2)U34 oxidoreductase.

This sequence in the N-terminal section; belongs to the methyltransferase superfamily. tRNA (mnm(5)s(2)U34)-methyltransferase family. The protein in the C-terminal section; belongs to the DAO family. The cofactor is FAD.

It is found in the cytoplasm. The enzyme catalyses 5-aminomethyl-2-thiouridine(34) in tRNA + S-adenosyl-L-methionine = 5-methylaminomethyl-2-thiouridine(34) in tRNA + S-adenosyl-L-homocysteine + H(+). Catalyzes the last two steps in the biosynthesis of 5-methylaminomethyl-2-thiouridine (mnm(5)s(2)U) at the wobble position (U34) in tRNA. Catalyzes the FAD-dependent demodification of cmnm(5)s(2)U34 to nm(5)s(2)U34, followed by the transfer of a methyl group from S-adenosyl-L-methionine to nm(5)s(2)U34, to form mnm(5)s(2)U34. The chain is tRNA 5-methylaminomethyl-2-thiouridine biosynthesis bifunctional protein MnmC from Delftia acidovorans (strain DSM 14801 / SPH-1).